The primary structure comprises 967 residues: Muscular LMNA-interacting protein (967 aa).

S129 is subject to Phosphoserine. Disordered stretches follow at residues 132–154 (EDEA…IATR), 302–336 (GLAS…ASLT), 432–462 (QKVK…HQAS), 506–628 (GSTL…SASH), 644–685 (QTLQ…TPSL), 786–838 (SMHS…SQLT), and 929–967 (FSVR…DSKE). The segment at 144–811 (PPGGPGNIAT…GSETIKTPTT (668 aa)) is required for interaction with ISL1. A compositionally biased stretch (low complexity) spans 437–455 (TPPTSKKSLSSGSLTTGST). Over residues 508–523 (TLRSNTTSPQPQTDTF) the composition is skewed to polar residues. The span at 528–541 (VPSVTPVLSPLSSS) shows a compositional bias: low complexity. Residues 543–556 (GRKDGDSRTPEKNR) are compositionally biased toward basic and acidic residues. Polar residues-rich tracts occupy residues 558 to 567 (ICIQPSTLAS) and 658 to 685 (GSAT…TPSL). Phosphoserine is present on S792. Residues 800 to 811 (MLGSETIKTPTT) show a composition bias toward polar residues. A compositionally biased stretch (low complexity) spans 826-835 (SSSSSTASES). Positions 938–947 (SPTLLSQDTY) are enriched in polar residues. The segment covering 958–967 (PEHDTLDSKE) has biased composition (basic and acidic residues).

In terms of assembly, directly interacts with LMNA. Interacts with ISL1 (via N-terminal domain); the interaction represses ISL1 transactivator activity. Interactions of ISL1 with MLIP1 and GCN5/KAT2A may be mutually exclusive. Post-translationally, may be ubiquitinated by UBE3C ubiquitin ligase; ubiquitination is followed by protein degradation. As to expression, predominantly expressed in the heart and skeletal muscle, but detected at lower levels in the lung and brain (at protein level). Also detected in smooth muscle, thymus and kidney. In brain, expressed by a subpopulation of cells within the hippocampus and cortex. In heart, expressed by cardiomyocytes. Expression is reduced in hypertrophic hearts at the transcript level. However, expression in hypertrophic hearts induced by transverse aortic constriction do not differ from control at the protein level.

It is found in the nucleus. The protein resides in the nucleus envelope. Its subcellular location is the PML body. It localises to the cytoplasm. The protein localises to the cytosol. It is found in the cell membrane. The protein resides in the sarcolemma. Its function is as follows. Required for myoblast differentiation into myotubes, possibly acting as a transcriptional regulator of the myogenic program. Required for cardiac adaptation to stress through integrated regulation of the AKT/mTOR pathways and FOXO1. Regulates cardiac homeostasis and plays a role in the protection against cardiac hypertrophy. Binds chromatin. May act as a transcriptional cofactor for ISL1, repressing its transcriptional activity. May also repress MYOCD transcriptional activity. This chain is Muscular LMNA-interacting protein, found in Mus musculus (Mouse).